The following is a 338-amino-acid chain: MSAVNENNLEGVSETVLTLRKVVVNESEPLARRFRALFSLKYLACLQPPSEDTLPAIEAIAAAFSSKSALLKHELAYCLGQTRNPDAVAFLQQVLKDKEEDVMCRHEAAEALGALGYEDSLEILKALKDDENEPEVIRETCDIAVDRIVWENSEARKAEKLKPSDFTSIDPAPPMPLEAAEPSIPELEKTLLDTKLPLFQRYRAMFALRDLASPPDLPTAVQAVDALAKGLKDPSALFRHEVAFVFGQLCHPASVPSLTECLSNQEEAGMVRHEAAEALGSLGDVEGVEDTLKKFLNDPEQVVRDSIIVALDMAEFEKNGEMEYALVPDSGAPAAVSA.

HEAT-like PBS-type repeat units lie at residues 71 to 97 (LKHE…VLKD), 104 to 130 (CRHE…LKDD), 200 to 233 (QRYR…GLKD), 238 to 264 (FRHE…CLSN), and 271 to 298 (VRHE…FLND). Positions 73, 74, 106, and 107 each coordinate Fe cation. Positions 240, 241, 273, and 274 each coordinate Fe cation.

The protein belongs to the deoxyhypusine hydroxylase family. It depends on Fe(2+) as a cofactor.

The protein localises to the cytoplasm. It is found in the nucleus. It carries out the reaction [eIF5A protein]-deoxyhypusine + AH2 + O2 = [eIF5A protein]-hypusine + A + H2O. The protein operates within protein modification; eIF5A hypusination. Catalyzes the hydroxylation of the N(6)-(4-aminobutyl)-L-lysine intermediate to form hypusine, an essential post-translational modification only found in mature eIF-5A factor. The polypeptide is Deoxyhypusine hydroxylase (lia1) (Aspergillus niger (strain ATCC MYA-4892 / CBS 513.88 / FGSC A1513)).